Here is a 1438-residue protein sequence, read N- to C-terminus: DNA-directed RNA polymerase subunit beta' (1438 aa).

Zn(2+)-binding residues include Cys70, Cys72, Cys85, and Cys88. Mg(2+)-binding residues include Asp461, Asp463, and Asp465. Residues Cys821, Cys895, Cys902, and Cys905 each contribute to the Zn(2+) site. Residues 1413–1427 (DAMAAAMGGDSAGGD) show a composition bias toward low complexity. The tract at residues 1413 to 1438 (DAMAAAMGGDSAGGDTKPEAPEASEE) is disordered.

Belongs to the RNA polymerase beta' chain family. In terms of assembly, the RNAP catalytic core consists of 2 alpha, 1 beta, 1 beta' and 1 omega subunit. When a sigma factor is associated with the core the holoenzyme is formed, which can initiate transcription. Requires Mg(2+) as cofactor. The cofactor is Zn(2+).

The enzyme catalyses RNA(n) + a ribonucleoside 5'-triphosphate = RNA(n+1) + diphosphate. Functionally, DNA-dependent RNA polymerase catalyzes the transcription of DNA into RNA using the four ribonucleoside triphosphates as substrates. The sequence is that of DNA-directed RNA polymerase subunit beta' from Erythrobacter litoralis (strain HTCC2594).